A 134-amino-acid polypeptide reads, in one-letter code: Urease subunit beta (134 aa).

Belongs to the urease beta subunit family. Heterotrimer of UreA (gamma), UreB (beta) and UreC (alpha) subunits. Three heterotrimers associate to form the active enzyme.

It localises to the cytoplasm. The enzyme catalyses urea + 2 H2O + H(+) = hydrogencarbonate + 2 NH4(+). It functions in the pathway nitrogen metabolism; urea degradation; CO(2) and NH(3) from urea (urease route): step 1/1. The polypeptide is Urease subunit beta (Staphylococcus saprophyticus subsp. saprophyticus (strain ATCC 15305 / DSM 20229 / NCIMB 8711 / NCTC 7292 / S-41)).